A 466-amino-acid polypeptide reads, in one-letter code: Asparagine--tRNA ligase (466 aa).

The protein belongs to the class-II aminoacyl-tRNA synthetase family. In terms of assembly, homodimer.

The protein localises to the cytoplasm. It catalyses the reaction tRNA(Asn) + L-asparagine + ATP = L-asparaginyl-tRNA(Asn) + AMP + diphosphate + H(+). The sequence is that of Asparagine--tRNA ligase from Vibrio cholerae serotype O1 (strain ATCC 39315 / El Tor Inaba N16961).